The primary structure comprises 698 residues: Polyribonucleotide nucleotidyltransferase (698 aa).

Residues D487 and D493 each contribute to the Mg(2+) site. One can recognise a KH domain in the interval 555 to 614; sequence PKIIQIQIDPQKIGDVVGQRGKTINAIIEQTGVKIDINDEGAVSVCGTDKDMMDKAINMI. An S1 motif domain is found at 624–692; it reads GQVFEGKVIS…KMGRISFSIK (69 aa).

This sequence belongs to the polyribonucleotide nucleotidyltransferase family. The cofactor is Mg(2+).

It localises to the cytoplasm. It carries out the reaction RNA(n+1) + phosphate = RNA(n) + a ribonucleoside 5'-diphosphate. Functionally, involved in mRNA degradation. Catalyzes the phosphorolysis of single-stranded polyribonucleotides processively in the 3'- to 5'-direction. This is Polyribonucleotide nucleotidyltransferase from Lachnoclostridium phytofermentans (strain ATCC 700394 / DSM 18823 / ISDg) (Clostridium phytofermentans).